The primary structure comprises 448 residues: N-succinylarginine dihydrolase (448 aa).

Residues A19–S28, N110, and H137–R138 each bind substrate. Residue E174 is part of the active site. R216 is a binding site for substrate. Residue H252 is part of the active site. 2 residues coordinate substrate: D254 and N366. C372 (nucleophile) is an active-site residue.

This sequence belongs to the succinylarginine dihydrolase family. As to quaternary structure, homodimer.

The enzyme catalyses N(2)-succinyl-L-arginine + 2 H2O + 2 H(+) = N(2)-succinyl-L-ornithine + 2 NH4(+) + CO2. It participates in amino-acid degradation; L-arginine degradation via AST pathway; L-glutamate and succinate from L-arginine: step 2/5. Catalyzes the hydrolysis of N(2)-succinylarginine into N(2)-succinylornithine, ammonia and CO(2). The sequence is that of N-succinylarginine dihydrolase from Legionella pneumophila (strain Corby).